We begin with the raw amino-acid sequence, 445 residues long: V-type proton ATPase subunit H (445 aa).

This sequence belongs to the V-ATPase H subunit family. V-ATPase is a heteromultimeric enzyme composed of a peripheral catalytic V1 complex (components A to H) attached to an integral membrane V0 proton pore complex (components: a, c, c', c'' and d).

Subunit of the peripheral V1 complex of vacuolar ATPase. Subunit H activates the ATPase activity of the enzyme and couples ATPase activity to proton flow. Vacuolar ATPase is responsible for acidifying a variety of intracellular compartments in eukaryotic cells, thus providing most of the energy required for transport processes in the vacuolar system. The polypeptide is V-type proton ATPase subunit H (vatH) (Dictyostelium discoideum (Social amoeba)).